The sequence spans 462 residues: Glycine--tRNA ligase (462 aa).

Substrate is bound by residues R94 and E143. Residues 175–177, 185–190, 259–260, and 308–311 contribute to the ATP site; these read RNE, FRTCEF, EL, and GLTR. 190–194 provides a ligand contact to substrate; sequence FEQME. 304–308 is a substrate binding site; that stretch reads ETSAG.

Belongs to the class-II aminoacyl-tRNA synthetase family. In terms of assembly, homodimer.

The protein resides in the cytoplasm. The catalysed reaction is tRNA(Gly) + glycine + ATP = glycyl-tRNA(Gly) + AMP + diphosphate. Functionally, catalyzes the attachment of glycine to tRNA(Gly). In Treponema pallidum (strain Nichols), this protein is Glycine--tRNA ligase.